A 762-amino-acid polypeptide reads, in one-letter code: Anhydrosialidase (762 aa).

Positions 1-27 (MGRIGKKAMAIALVSAVMVTPLNVCAT) are cleaved as a signal peptide. Arg293 serves as a coordination point for substrate. Asp318 acts as the Proton acceptor in catalysis. 3 BNR repeats span residues 328–339 (AKSTDGGNTWSE), 511–522 (RYSDDEGASWSD), and 571–582 (MYSDDHGDNWTY). Residue Glu595 is part of the active site. Arg611 provides a ligand contact to substrate. Residues 620-631 (VTSIDGGETWSD) form a BNR 4 repeat. Residue Arg673 participates in substrate binding. Tyr713 serves as the catalytic Nucleophile.

This sequence belongs to the glycosyl hydrolase 33 family.

The protein localises to the secreted. It localises to the extracellular space. The enzyme catalyses Elimination of alpha-sialyl groups in N-acetylneuraminic acid glycosides, releasing 2,7-anhydro-alpha-N-acetylneuraminate.. The polypeptide is Anhydrosialidase (Macrobdella decora (North American leech)).